Reading from the N-terminus, the 48-residue chain is Omega-agatoxin-Aa5a (48 aa).

Intrachain disulfides connect cysteine 3–cysteine 16, cysteine 10–cysteine 21, cysteine 15–cysteine 32, and cysteine 23–cysteine 30.

This sequence belongs to the neurotoxin 02 (plectoxin) family. In terms of tissue distribution, expressed by the venom gland.

The protein localises to the secreted. Its function is as follows. The toxin blocks voltage-gated calcium channels in rat cerebellar granule cells (IC(50)=200 nM). The chain is Omega-agatoxin-Aa5a from Agelenopsis aperta (North American funnel-web spider).